The sequence spans 578 residues: Isocitrate dehydrogenase kinase/phosphatase (578 aa).

ATP-binding positions include 315–321 (APGIRGM) and Lys336. Residue Asp371 is part of the active site.

The protein belongs to the AceK family.

It localises to the cytoplasm. It carries out the reaction L-seryl-[isocitrate dehydrogenase] + ATP = O-phospho-L-seryl-[isocitrate dehydrogenase] + ADP + H(+). Bifunctional enzyme which can phosphorylate or dephosphorylate isocitrate dehydrogenase (IDH) on a specific serine residue. This is a regulatory mechanism which enables bacteria to bypass the Krebs cycle via the glyoxylate shunt in response to the source of carbon. When bacteria are grown on glucose, IDH is fully active and unphosphorylated, but when grown on acetate or ethanol, the activity of IDH declines drastically concomitant with its phosphorylation. This chain is Isocitrate dehydrogenase kinase/phosphatase, found in Shigella dysenteriae serotype 1 (strain Sd197).